A 238-amino-acid chain; its full sequence is Bacterial microcompartment shell protein PduB (238 aa).

BMC circularly permuted domains follow at residues 14–125 (FVGA…VYNA) and 126–225 (KAGH…LSQF). Cys-158 and Cys-197 are disulfide-bonded.

Belongs to the EutL/PduB family. As to quaternary structure, homotrimerizes to form a pseudohexamer with a central pore 7.5 Angstroms wide and 22 Angstroms long; the pore channel in the crystal binds up to 4 glycerol molecules. A disulfide bond forms in the pore, it is not clear if this is an artifact. The trimers pack into an array.

It is found in the bacterial microcompartment. It participates in polyol metabolism; 1,2-propanediol degradation. Its function is as follows. One of the major shell proteins of the bacterial microcompartment (BMC) dedicated to 1,2-propanediol (1,2-PD) degradation. Probably involved in a propanediol fermentation/reuterin formation pathway. The chain is Bacterial microcompartment shell protein PduB from Limosilactobacillus reuteri (strain DSM 20016) (Lactobacillus reuteri).